The chain runs to 371 residues: Cytochrome b (371 aa).

Helical transmembrane passes span F25–V45, W69–I90, W105–L125, and F170–I190. Residues H75 and H89 each coordinate heme b. Positions 174 and 188 each coordinate heme b. H193 contributes to the a ubiquinone binding site. 4 consecutive transmembrane segments (helical) span residues Y218 to F238, L280 to H300, L312 to T332, and F339 to P358.

It belongs to the cytochrome b family. In terms of assembly, the cytochrome bc1 complex contains 3 respiratory subunits (MT-CYB, CYC1 and UQCRFS1), 2 core proteins (UQCRC1 and UQCRC2) and probably 6 low-molecular weight proteins. Requires heme b as cofactor.

It is found in the mitochondrion inner membrane. In terms of biological role, component of the ubiquinol-cytochrome c reductase complex (complex III or cytochrome b-c1 complex) that is part of the mitochondrial respiratory chain. The b-c1 complex mediates electron transfer from ubiquinol to cytochrome c. Contributes to the generation of a proton gradient across the mitochondrial membrane that is then used for ATP synthesis. The chain is Cytochrome b (MT-CYB) from Malayopython reticulatus (Reticulate python).